A 493-amino-acid chain; its full sequence is Cobyric acid synthase (493 aa).

A GATase cobBQ-type domain is found at 246–440 (PIDIAVIKMP…IHGVFDGVVF (195 aa)). C326 functions as the Nucleophile in the catalytic mechanism. H432 is a catalytic residue.

This sequence belongs to the CobB/CobQ family. CobQ subfamily.

The protein operates within cofactor biosynthesis; adenosylcobalamin biosynthesis. Its function is as follows. Catalyzes amidations at positions B, D, E, and G on adenosylcobyrinic A,C-diamide. NH(2) groups are provided by glutamine, and one molecule of ATP is hydrogenolyzed for each amidation. The protein is Cobyric acid synthase of Clostridium botulinum (strain Okra / Type B1).